The following is a 325-amino-acid chain: MQYYQMMKALRMLKKPKPGCLGIEIQSVPIPQPKNGELLVKIEAAAINPSDLMNATGGFPYTVYPRIVGRDYAGTVISGASHLVGTRVFGTSGSELSFTKDGTHAEYCIIPEKAAVRMPSNLSFTEAASVGVPFTTAYLALSRGETKGSDIVLVVGALGAVGSAVCQIAEDWGCKVITVSRSGSTDINTVVDPELKRVHELVEKVDVVIDTVGDPLLMKSALNQLGIGGRLSYISAPKQGSIEFSYDMKQIYRKNLKIIGCNSLLLSLVESNSLLKNMVAKFEAGKYKVLNKKIAETSLTDECINSYRKLMNECSTKFVITMSTN.

The protein belongs to the zinc-containing alcohol dehydrogenase family. Quinone oxidoreductase subfamily.

Its subcellular location is the cytoplasm. The protein localises to the nucleus. The polypeptide is Zinc-type alcohol dehydrogenase-like protein C337.11 (Schizosaccharomyces pombe (strain 972 / ATCC 24843) (Fission yeast)).